We begin with the raw amino-acid sequence, 334 residues long: Fructose-1,6-bisphosphatase class 1 2 (334 aa).

Glu-92, Asp-114, Leu-116, and Asp-117 together coordinate Mg(2+). Substrate contacts are provided by residues 117–120 (DGSS), Asn-208, and Lys-274. A Mg(2+)-binding site is contributed by Glu-280.

Belongs to the FBPase class 1 family. Homotetramer. It depends on Mg(2+) as a cofactor.

It is found in the cytoplasm. It carries out the reaction beta-D-fructose 1,6-bisphosphate + H2O = beta-D-fructose 6-phosphate + phosphate. Its pathway is carbohydrate biosynthesis; gluconeogenesis. The polypeptide is Fructose-1,6-bisphosphatase class 1 2 (Albidiferax ferrireducens (strain ATCC BAA-621 / DSM 15236 / T118) (Rhodoferax ferrireducens)).